A 540-amino-acid chain; its full sequence is CBL-interacting protein kinase 12 (540 aa).

Residues 1–23 (MLMATVSPARREPTPQAVRASPM) form a disordered region. The 255-residue stretch at 46-300 (YELGRVLGQG…VPEIIESDWF (255 aa)) folds into the Protein kinase domain. ATP contacts are provided by residues 52–60 (LGQGSFAKV) and lysine 75. Catalysis depends on aspartate 168, which acts as the Proton acceptor. The activation loop stretch occupies residues 186–215 (DFGLAAGPDQFDPDGLLHTFCGTPAYVAPE). The span at 333 to 348 (PPPLGLAPPVPPPPQG) shows a compositional bias: pro residues. The disordered stretch occupies residues 333–380 (PPPLGLAPPVPPPPQGDDPDGSGSESDSSVVSCPATLSTGESQRVRGS). Low complexity predominate over residues 353 to 364 (GSGSESDSSVVS). The 37-residue stretch at 370-406 (STGESQRVRGSLPRPASLNAFDIISFSKGFNLSGLFE) folds into the NAF domain. Residues 409–438 (GNEIRFVSGEPMSDIVKKLEEIAKVKSFTV) form a PPI region.

Belongs to the protein kinase superfamily. CAMK Ser/Thr protein kinase family. SNF1 subfamily. Mg(2+) serves as cofactor. In terms of processing, autophosphorylated. In terms of tissue distribution, expressed at low levels in leaf blades.

The catalysed reaction is L-seryl-[protein] + ATP = O-phospho-L-seryl-[protein] + ADP + H(+). The enzyme catalyses L-threonyl-[protein] + ATP = O-phospho-L-threonyl-[protein] + ADP + H(+). In terms of biological role, involved in drought stress tolerance. CIPK serine-threonine protein kinases interact with CBL proteins. Binding of a CBL protein to the regulatory NAF domain of CIPK protein lead to the activation of the kinase in a calcium-dependent manner. In Oryza sativa subsp. japonica (Rice), this protein is CBL-interacting protein kinase 12 (CIPK12).